The following is a 254-amino-acid chain: Probable phosphatase TTE1963 (254 aa).

Positions 14, 16, 22, 47, 80, 108, 139, 200, and 202 each coordinate Zn(2+).

This sequence belongs to the PHP family. It depends on Zn(2+) as a cofactor.

This is Probable phosphatase TTE1963 from Caldanaerobacter subterraneus subsp. tengcongensis (strain DSM 15242 / JCM 11007 / NBRC 100824 / MB4) (Thermoanaerobacter tengcongensis).